The chain runs to 90 residues: Small ribosomal subunit protein bS16 (90 aa).

It belongs to the bacterial ribosomal protein bS16 family.

In Lactobacillus delbrueckii subsp. bulgaricus (strain ATCC 11842 / DSM 20081 / BCRC 10696 / JCM 1002 / NBRC 13953 / NCIMB 11778 / NCTC 12712 / WDCM 00102 / Lb 14), this protein is Small ribosomal subunit protein bS16.